The chain runs to 36 residues: Protein YibY (36 aa).

This is Protein YibY from Escherichia coli (strain K12).